Consider the following 674-residue polypeptide: MVGIDALRSEAERLRSDIERHNHLYYVEAKPELSDYDFDLLLDRLVQLEREHPELVTPDSPTQRVGGTITKEFPSVEHREPMLSLANTYSIGEVEEFVGRLNRLLEAEGAQGRDTVAELKFDGVAVSLLYRDGLLIRGATRGDGRRGDDITVNLKTVPSIPLRLGEFDGPFSAGEGREVEVRGEVLMRKEDFEALNDTRPEEDRFANPRNATAGTLKLQDSREVARRSLWFVAYYVSGLHDEDTRHVDRLKLLETAGFSTGNQYRLCHGIEEIEAFMQFWDEGRRALPYETDGVVVKLNDVRQWRLLGATSKSPRWAIAYKYPASRATTLLRDIVFQVGRLGTITPVAELEPVHIAGSTVARSTLHNFDEMRRLGVMPGDRVVIEKSGEVIPKVISVLLEERPPGLSAKELPTHCPDCGTPLVQPEGEVSWYCPNEEGCGAQIRGRVLHFASRNAMDIENLGESLVEQLVAKGMVKDPGDLYFLREEELAGLERMGEKSARNLLQGLLKSREQSFARLLFGLGIRHVGRATARELAKACSSIEVLKEASFEELSEVPDIGPVIARSIRDWFLKPAIPSLIEKLRRAGLPLAAEEPGPLVNTNFEGLTVVFTGGLQRHDRSSAGELVVARGGIVVSTVSKKTGLVVAGKEAGSKLEKARKLGLRIITEDEFDALL.

Residues 35–39 (DYDFD), 84–85 (SL), and E118 contribute to the NAD(+) site. K120 (N6-AMP-lysine intermediate) is an active-site residue. Residues R141, E184, K297, and K321 each coordinate NAD(+). Zn(2+) contacts are provided by C415, C418, C433, and C439. In terms of domain architecture, BRCT spans 598-674 (LVNTNFEGLT…ITEDEFDALL (77 aa)).

It belongs to the NAD-dependent DNA ligase family. LigA subfamily. The cofactor is Mg(2+). Requires Mn(2+) as cofactor.

It catalyses the reaction NAD(+) + (deoxyribonucleotide)n-3'-hydroxyl + 5'-phospho-(deoxyribonucleotide)m = (deoxyribonucleotide)n+m + AMP + beta-nicotinamide D-nucleotide.. Functionally, DNA ligase that catalyzes the formation of phosphodiester linkages between 5'-phosphoryl and 3'-hydroxyl groups in double-stranded DNA using NAD as a coenzyme and as the energy source for the reaction. It is essential for DNA replication and repair of damaged DNA. The sequence is that of DNA ligase from Chlorobium phaeovibrioides (strain DSM 265 / 1930) (Prosthecochloris vibrioformis (strain DSM 265)).